The primary structure comprises 3241 residues: PHD finger protein rhinoceros (3241 aa).

A compositionally biased stretch (basic residues) spans 1–16 (MSQRGKRGNQQHHQSH). The segment at 1 to 126 (MSQRGKRGNQ…GASSSSSWQA (126 aa)) is disordered. Low complexity-rich tracts occupy residues 42–55 (PPNGATTAAVAEVT) and 90–126 (RAAAGATSTSKSKSTKLAKSASKCKSQGASSSSSWQA). The PHD-type 1 zinc-finger motif lies at 312–362 (NVICDVCRSPDSEEANEMVFCDNCNICVHQACYGITAIPSGQWLCRTCSMG). The C2HC pre-PHD-type zinc finger occupies 364–398 (KPDCVLCPNKGGAMKSNKSGKHWAHVSCALWIPEV). The segment at 422–481 (LICVLCRKRVGSCIQCSVKPCKTAYHVTCAFQHGLEMRAIIEEGNAEDGVKLRSYCQKHS) adopts a PHD-type 2 zinc-finger fold. Disordered stretches follow at residues 482–501 (MSKGKKENAGSHGGGSASVA), 508–554 (NRYG…ARAQ), 737–1266 (SGKQ…VATP), 1279–1483 (PQRQ…STKV), 1500–1613 (PKTN…SETR), and 1632–1746 (NLGA…QHLL). A compositionally biased stretch (basic and acidic residues) spans 540-554 (KTELTSEERNQARAQ). Positions 762–777 (KKLNNGILSSRTSSPE) are enriched in polar residues. Positions 807 to 874 (KSSAAAATST…SGSSSAGSGV (68 aa)) are enriched in low complexity. Residues 931-943 (ERCRNRQEPERGA) show a composition bias toward basic and acidic residues. A compositionally biased stretch (polar residues) spans 949–965 (QSKSVPNRSQASRSKPT). A compositionally biased stretch (acidic residues) spans 995–1007 (DADESVSSDESEE). Residues 1019–1031 (STTTSGLATTGSA) are compositionally biased toward low complexity. Polar residues predominate over residues 1060–1075 (TVESNVSDSQNQQTIR). Residues 1087–1104 (TAATTSSTSQAASSTSKA) show a composition bias toward low complexity. 2 stretches are compositionally biased toward polar residues: residues 1117 to 1126 (IGNSTKTKPN) and 1151 to 1163 (NMRSTNLATTLQP). The span at 1184–1211 (KVKDSSSRVSNEADKSSLEKVRPKEHLQ) shows a compositional bias: basic and acidic residues. Polar residues predominate over residues 1313–1327 (VTSATISGSGSSVPA). Thr-1346 is modified (phosphothreonine). A Phosphoserine modification is found at Ser-1352. Thr-1364 carries the post-translational modification Phosphothreonine. Residues 1382 to 1426 (SSSSSGDSESSSSSSSSGSSSSSGGSDSDSESQASNSENPSSREP) show a composition bias toward low complexity. Phosphothreonine is present on Thr-1456. Polar residues predominate over residues 1463-1483 (NVLNIPSTRSRQNSTTKSTKV). The segment covering 1541-1558 (SPEKTVSRCKSRAEESPK) has biased composition (basic and acidic residues). The span at 1576–1594 (KGTSSLDKLLNKKQQQMNH) shows a compositional bias: polar residues. A compositionally biased stretch (pro residues) spans 1599–1608 (TPPPISPTPP). Residues 1664 to 1675 (TAPTRTQLSASA) show a composition bias toward polar residues. The span at 1688-1699 (PAAPLPASPTPT) shows a compositional bias: pro residues. The span at 1717-1731 (RRMRWRSRRRRRRRS) shows a compositional bias: basic residues. Coiled-coil stretches lie at residues 1741–1770 (HTQHLLNEMEMARELEEERKNELLANASKY) and 1893–1925 (SEEDSIQATRNLLEKLRKTKRKAQDDCSSKEAV). 11 disordered regions span residues 2037–2061 (LEKSPHQKGACPLSSNGGANVGQPA), 2124–2148 (AERRSSSPSSVSESNDPPQPPPVVT), 2203–2227 (NNTNTTQHQPTTPAHQQQQQRTPNN), 2346–2454 (TPPV…GGVT), 2598–2629 (ATGTGTSPSKQHSGPTALVAPPTGPNPTPAPN), 2667–2691 (SEEVSIDSDSTIPHSKTSTSDARSQ), 2768–2811 (NDDS…NSSS), 2832–2911 (GAGA…SVDE), 2964–3015 (NKRG…TTTM), 3042–3169 (KAET…EAAM), and 3184–3241 (VNVG…CEVR). Residues 2359 to 2381 (KRTSVSGSNLSKKQTHKSPQLPQ) are compositionally biased toward polar residues. Positions 2392 to 2402 (PLQPPTPPAPV) are enriched in pro residues. Positions 2430–2439 (GSGGSGAPGR) are enriched in gly residues. Polar residues-rich tracts occupy residues 2598-2611 (ATGTGTSPSKQHSG) and 2673-2689 (DSDSTIPHSKTSTSDAR). Residues 2855 to 2865 (NNDNNGKTGAA) are compositionally biased toward polar residues. Basic and acidic residues predominate over residues 2876–2887 (KTLESSEDDHQA). Residues Ser-2880 and Ser-2881 each carry the phosphoserine modification. Polar residues predominate over residues 2899–2911 (ANETPSGVSSVDE). Over residues 2964–2974 (NKRGVVVKDGE) the composition is skewed to basic and acidic residues. Basic residues predominate over residues 2984 to 3002 (KRPKSSKPKKEKKEKKRQK). Positions 3003 to 3015 (QQQLILSSSTTTM) are enriched in low complexity. 2 positions are modified to phosphoserine: Ser-3104 and Ser-3110. Polar residues-rich tracts occupy residues 3115 to 3130 (LLNSFTPHSQNANTSP) and 3184 to 3197 (VNVGNYENSNNSLP). The span at 3198–3218 (SASGTGSASSNSCNSNSINNN) shows a compositional bias: low complexity. Positions 3219–3230 (GSGGGRASGEGG) are enriched in gly residues.

This sequence belongs to the JADE family.

The protein resides in the nucleus. Its function is as follows. May function as a negative regulator of the EGFR/Ras/MAPK signaling pathway during eye development. This Drosophila melanogaster (Fruit fly) protein is PHD finger protein rhinoceros (rno).